Reading from the N-terminus, the 697-residue chain is Probable glutamine--tRNA ligase (697 aa).

The short motif at 204 to 214 (PEPNGILHIGH) is the 'HIGH' region element. Residues 205 to 207 (EPN) and 211 to 217 (HIGHAKA) contribute to the ATP site. Aspartate 237 and tyrosine 386 together coordinate L-glutamine. Residues threonine 405, 434 to 435 (RL), and 442 to 444 (LSK) each bind ATP. A 'KMSKS' region motif is present at residues 441-445 (VLSKR).

This sequence belongs to the class-I aminoacyl-tRNA synthetase family.

It catalyses the reaction tRNA(Gln) + L-glutamine + ATP = L-glutaminyl-tRNA(Gln) + AMP + diphosphate. The sequence is that of Probable glutamine--tRNA ligase from Encephalitozoon cuniculi (strain GB-M1) (Microsporidian parasite).